The sequence spans 356 residues: Peptide chain release factor 1 (356 aa).

Glutamine 232 is modified (N5-methylglutamine). Residues 281 to 301 (ERQSSELSADRKAQVGSGDRS) form a disordered region.

It belongs to the prokaryotic/mitochondrial release factor family. Methylated by PrmC. Methylation increases the termination efficiency of RF1.

The protein localises to the cytoplasm. Its function is as follows. Peptide chain release factor 1 directs the termination of translation in response to the peptide chain termination codons UAG and UAA. The chain is Peptide chain release factor 1 from Desulfovibrio desulfuricans (strain ATCC 27774 / DSM 6949 / MB).